Here is a 456-residue protein sequence, read N- to C-terminus: Cytochrome c biogenesis protein CcsB (456 aa).

3 consecutive transmembrane segments (helical) span residues 29–49, 88–108, and 174–194; these read LRLA…GTVI, AGWF…CTFR, and VGPI…IWGS.

This sequence belongs to the Ccs1/CcsB family. In terms of assembly, may interact with CcsA.

It is found in the cellular thylakoid membrane. Its function is as follows. Required during biogenesis of c-type cytochromes (cytochrome c6 and cytochrome f) at the step of heme attachment. This chain is Cytochrome c biogenesis protein CcsB, found in Synechococcus sp. (strain ATCC 27144 / PCC 6301 / SAUG 1402/1) (Anacystis nidulans).